A 326-amino-acid polypeptide reads, in one-letter code: GATA zinc finger domain-containing protein 21 (326 aa).

Disordered regions lie at residues 1–102 (MFRN…NNNN) and 145–238 (QNQS…TPER). Composition is skewed to low complexity over residues 17 to 102 (NTNL…NNNN) and 148 to 164 (SSSS…GSSA). Residues 165 to 189 (LNSINNNNYSPTTSSLNRVRNQYNQ) are compositionally biased toward polar residues. Residues 193–218 (DEEDDDYDNGAEDGFDYDGDDNEDGS) are compositionally biased toward acidic residues. The segment at 239–266 (CSNCKITHSSYWRRITVNGQKLDFCNAC) adopts a GATA-type zinc-finger fold. The segment at 277–326 (IKESKQRHSIQNIMNQNQEEEEEEREEEEEEEEEEDEEFETLEEEEEDDE) is disordered. Over residues 294–326 (QEEEEEEREEEEEEEEEEDEEFETLEEEEEDDE) the composition is skewed to acidic residues.

This chain is GATA zinc finger domain-containing protein 21 (gtaU), found in Dictyostelium discoideum (Social amoeba).